The sequence spans 876 residues: Leucine--tRNA ligase (876 aa).

Positions 42–52 (PYPSGKLHMGH) match the 'HIGH' region motif. Residues 634 to 638 (KMSKS) carry the 'KMSKS' region motif. Residue K637 coordinates ATP.

This sequence belongs to the class-I aminoacyl-tRNA synthetase family.

The protein localises to the cytoplasm. The catalysed reaction is tRNA(Leu) + L-leucine + ATP = L-leucyl-tRNA(Leu) + AMP + diphosphate. In Neisseria meningitidis serogroup C / serotype 2a (strain ATCC 700532 / DSM 15464 / FAM18), this protein is Leucine--tRNA ligase.